A 580-amino-acid chain; its full sequence is mRNA cap guanine-N(7) methyltransferase (580 aa).

2 stretches are compositionally biased toward polar residues: residues 1–17 and 25–53; these read MSGS…TSLI and EATS…NSDL. A disordered region spans residues 1-222; the sequence is MSGSKQGSEK…PVEAQPYSRL (222 aa). The span at 54-67 shows a compositional bias: basic and acidic residues; it reads KVTENKPKNTEMKP. Positions 69–90 are enriched in polar residues; it reads DPNTNASTTENTPITTSNAQVS. The span at 102–154 shows a compositional bias: basic and acidic residues; it reads REPEEAQNRYDRYVPRVDNRRRGEPRVAEVRQDPRYAKYLRQDQEERRIRRPD. Residues 191–214 show a composition bias toward acidic residues; sequence ESEENGDEQQGDDEEETPGNEEPV. The 309-residue stretch at 271–579 folds into the mRNA cap 0 methyltransferase domain; it reads SPIYKLRNFN…FYLGFAFEKL (309 aa). 280–281 lines the mRNA pocket; sequence NN. Lysine 284, cysteine 308, aspartate 330, aspartate 376, glutamine 406, and tyrosine 411 together coordinate S-adenosyl-L-methionine.

It belongs to the class I-like SAM-binding methyltransferase superfamily. mRNA cap 0 methyltransferase family.

The protein resides in the nucleus. The enzyme catalyses a 5'-end (5'-triphosphoguanosine)-ribonucleoside in mRNA + S-adenosyl-L-methionine = a 5'-end (N(7)-methyl 5'-triphosphoguanosine)-ribonucleoside in mRNA + S-adenosyl-L-homocysteine. Its function is as follows. Responsible for methylating the 5'-cap structure of mRNAs. This chain is mRNA cap guanine-N(7) methyltransferase (ABD1), found in Meyerozyma guilliermondii (strain ATCC 6260 / CBS 566 / DSM 6381 / JCM 1539 / NBRC 10279 / NRRL Y-324) (Yeast).